A 283-amino-acid polypeptide reads, in one-letter code: Elongation factor Ts (283 aa).

The involved in Mg(2+) ion dislocation from EF-Tu stretch occupies residues 79–82 (TDFV).

It belongs to the EF-Ts family.

Its subcellular location is the cytoplasm. Associates with the EF-Tu.GDP complex and induces the exchange of GDP to GTP. It remains bound to the aminoacyl-tRNA.EF-Tu.GTP complex up to the GTP hydrolysis stage on the ribosome. This chain is Elongation factor Ts, found in Shewanella amazonensis (strain ATCC BAA-1098 / SB2B).